The chain runs to 300 residues: tRNA dimethylallyltransferase (300 aa).

9 to 16 (GPTASGKT) lines the ATP pocket. 11–16 (TASGKT) provides a ligand contact to substrate. The tract at residues 34–37 (DSQQ) is interaction with substrate tRNA.

Belongs to the IPP transferase family. In terms of assembly, monomer. Mg(2+) is required as a cofactor.

The enzyme catalyses adenosine(37) in tRNA + dimethylallyl diphosphate = N(6)-dimethylallyladenosine(37) in tRNA + diphosphate. Its function is as follows. Catalyzes the transfer of a dimethylallyl group onto the adenine at position 37 in tRNAs that read codons beginning with uridine, leading to the formation of N6-(dimethylallyl)adenosine (i(6)A). The sequence is that of tRNA dimethylallyltransferase from Anaeromyxobacter sp. (strain Fw109-5).